Here is a 144-residue protein sequence, read N- to C-terminus: Large ribosomal subunit protein uL13 (144 aa).

The protein belongs to the universal ribosomal protein uL13 family. Part of the 50S ribosomal subunit.

This protein is one of the early assembly proteins of the 50S ribosomal subunit, although it is not seen to bind rRNA by itself. It is important during the early stages of 50S assembly. This Nitratidesulfovibrio vulgaris (strain ATCC 29579 / DSM 644 / CCUG 34227 / NCIMB 8303 / VKM B-1760 / Hildenborough) (Desulfovibrio vulgaris) protein is Large ribosomal subunit protein uL13.